The sequence spans 448 residues: Serine--tRNA ligase (448 aa).

246-248 (TAE) is a binding site for L-serine. ATP contacts are provided by residues 277–279 (RKE) and valine 293. Glutamate 300 is a binding site for L-serine. 364–367 (ELAS) lines the ATP pocket. An L-serine-binding site is contributed by threonine 399.

The protein belongs to the class-II aminoacyl-tRNA synthetase family. Type-1 seryl-tRNA synthetase subfamily. As to quaternary structure, homodimer. The tRNA molecule binds across the dimer.

The protein resides in the cytoplasm. It carries out the reaction tRNA(Ser) + L-serine + ATP = L-seryl-tRNA(Ser) + AMP + diphosphate + H(+). It catalyses the reaction tRNA(Sec) + L-serine + ATP = L-seryl-tRNA(Sec) + AMP + diphosphate + H(+). The protein operates within aminoacyl-tRNA biosynthesis; selenocysteinyl-tRNA(Sec) biosynthesis; L-seryl-tRNA(Sec) from L-serine and tRNA(Sec): step 1/1. Catalyzes the attachment of serine to tRNA(Ser). Is also able to aminoacylate tRNA(Sec) with serine, to form the misacylated tRNA L-seryl-tRNA(Sec), which will be further converted into selenocysteinyl-tRNA(Sec). This Pyrobaculum islandicum (strain DSM 4184 / JCM 9189 / GEO3) protein is Serine--tRNA ligase.